Here is a 277-residue protein sequence, read N- to C-terminus: Large ribosomal subunit protein uL2c (277 aa).

Disordered stretches follow at residues 24–57 and 226–266; these read IVQSKPEKQLTSGQHRKKGRNNRGVITSRHRGGG and NAAD…HKYS.

The protein belongs to the universal ribosomal protein uL2 family. In terms of assembly, part of the 50S ribosomal subunit.

Its subcellular location is the plastid. It localises to the chloroplast. The protein is Large ribosomal subunit protein uL2c (rpl2) of Zygnema circumcarinatum (Green alga).